We begin with the raw amino-acid sequence, 195 residues long: Imidazoleglycerol-phosphate dehydratase (195 aa).

This sequence belongs to the imidazoleglycerol-phosphate dehydratase family.

It localises to the cytoplasm. The catalysed reaction is D-erythro-1-(imidazol-4-yl)glycerol 3-phosphate = 3-(imidazol-4-yl)-2-oxopropyl phosphate + H2O. It participates in amino-acid biosynthesis; L-histidine biosynthesis; L-histidine from 5-phospho-alpha-D-ribose 1-diphosphate: step 6/9. The chain is Imidazoleglycerol-phosphate dehydratase from Methylorubrum extorquens (strain CM4 / NCIMB 13688) (Methylobacterium extorquens).